The following is a 310-amino-acid chain: Protein RL1 (310 aa).

Polar residues predominate over residues 1-12; that stretch reads MPATDTNSTHTT. Positions 1–44 are disordered; sequence MPATDTNSTHTTPLHPEDQHTLPLHHSTTQPHVQTSDKHADKQH. Over residues 35-44 the composition is skewed to basic and acidic residues; the sequence is TSDKHADKQH. The tract at residues 153–159 is involved in the interaction with host DDB1; it reads LLLARQR. Residues 205-252 form a disordered region; it reads ERPSAGEAQARGLLPRIRITPISTSPRPKPPQPTTSTASHPHATARPD. Positions 238-248 are enriched in low complexity; that stretch reads TTSTASHPHAT.

It belongs to the HHV-5 HKLF1 family. Interacts with host adaptor protein DDB1; this interaction allows RL1 to recruit the cullin4-RING E3 ubiquitin ligase (CRL4) complex and promote SLN11 degradation.

In terms of biological role, degrades the host antiviral factor SLFN11 via the cullin4-RING E3 ubiquitin ligase (CRL4) complex. The sequence is that of Protein RL1 (RL1) from Human cytomegalovirus (strain Merlin) (HHV-5).